We begin with the raw amino-acid sequence, 192 residues long: A-type ATP synthase subunit E (192 aa).

It belongs to the V-ATPase E subunit family. Has multiple subunits with at least A(3), B(3), C, D, E, F, H, I and proteolipid K(x).

It is found in the cell membrane. Its function is as follows. Component of the A-type ATP synthase that produces ATP from ADP in the presence of a proton gradient across the membrane. The sequence is that of A-type ATP synthase subunit E from Methanoculleus marisnigri (strain ATCC 35101 / DSM 1498 / JR1).